Reading from the N-terminus, the 1007-residue chain is MMLSNLLPSPEPLGADEYGLCVASNLGLGQLFYRQVRQSPSSIAVVDDESSITYGQLHAWAVRLAAKLSQEGFVKEEAVGIVVQHGVADVVAQMAVIYAGGSCAPMDPTMRDQQIGQRLQRLNSRFILVDQSNRGRDLQFQQIVLEKHLPLTITDLCEENEFPVTTDLSHRTHLIHTSGTTSEPKAVQIAARSILQVVFHAPFEPLAVEDVVAHANNSSFDVSLFDIWAPLLRGARIAILKKMVLLDLVVLAEHIDRLGITVMATTTALLNLAASTLPTAFSKLRICFIGGEAANVSAIETVLRKGPPKMLINAYGPTECCIFCLAHRVTPKDIQMGSVSIGMPIGHTIAYIADESGCAANEGELWIGGAGVSPGYINEPEKNAKSFPTIMMPSGEAARFYRTGDIVRRRDDGQIDYVGRVDHQIKVRGFRIELEAIETSLLQTGLFAEVAAMGIQSPHQGAGSVLVAYATPKDPAHPPEISKALKILQDILPEYMIPQLQLIEKMPLNSHAKVDRKGLKQLFCQRSTSLLKPVPKLPNTLCQDTQTVLASLWATILATPKSEYKESDDFFVLGGTSLQASLLISQIRQVFRCEVSLLALYDNSTVGALASIIDHAKGGHLKTVRDEREVWLADTKLADDLPAPMTTPVNWQRDIEGRIFITGATGFVGAFLLSDLLHMPSVHQIGCLVRAPNSAAGMQRLRLALEKYNLWKDEFTNKLLAFPGLLEDKYLGLEQARFNELANWASVVFHLGARVNYTQPYSLHRPANTLGTINVVRFACTGRSKAVHYVSSISCFGPTGFFTGTASVGEDDSLLPHLEALPYDHGYAQSQWVADQLLRRLMDRGFPISIYRPGFITGHSQTGVCNPDDFFSRLMIACEQMKSYPMLPNQRKEFVPVDYVNSVILHIAASEHAVGRAYHIVPPNRDMSIDMDATMDLLGDAVNSRIHALPYMEWIDRLAANPPVALQPLQPMLAEKVHDANYPGGLKFPTLDCSLLKKYIAHLRSAC.

The interval 35 to 428 (QVRQSPSSIA…GRVDHQIKVR (394 aa)) is adenylation (A) domain. One can recognise a Carrier domain in the interval 540-617 (TLCQDTQTVL…ALASIIDHAK (78 aa)). Position 577 is an O-(pantetheine 4'-phosphoryl)serine (Ser577). The short-chain dehydrogenase/reductase (R) domain stretch occupies residues 659–998 (IFITGATGFV…PTLDCSLLKK (340 aa)).

This sequence belongs to the NRP synthetase family.

It catalyses the reaction L-tyrosinal + AMP + diphosphate + NADP(+) = L-tyrosine + ATP + NADPH + H(+). It functions in the pathway secondary metabolite biosynthesis. Non-canonical nonribosomal peptide synthetase; part of the lnb gene cluster that mediates the biosynthesis of diastereomeric piperazines. Lna and lnb clusters encode sets of enzymes that produce overlapping sets of previously undescribed metabolites such as piperazinomycin-like metabolites or morpholine. The lna and lnb biosynthetic pathways appear to be part of a signaling network that controls the formation of sclerotia, a resilient overwintering structure. One primary function of the non-canonical nonribosomal peptide synthetases lnaA and lnbA consists in the reduction of L-tyrosine. The presence in the clusters of tailoring enzymes such as the oxidoreductases lnaB, lnbB, lnaE or lnbE, as well as of the cytochrome P450 monooxygenases lnaC, lnaD, or lnbC, might explain formation of various diastereomeric piperazines. The polypeptide is Aldehyde reductase lnbA (Aspergillus flavus (strain ATCC 200026 / FGSC A1120 / IAM 13836 / NRRL 3357 / JCM 12722 / SRRC 167)).